The primary structure comprises 280 residues: UDP-3-O-acyl-N-acetylglucosamine deacetylase (280 aa).

Residues His79, His237, and Asp241 each contribute to the Zn(2+) site. His264 acts as the Proton donor in catalysis.

Belongs to the LpxC family. Zn(2+) is required as a cofactor.

It carries out the reaction a UDP-3-O-[(3R)-3-hydroxyacyl]-N-acetyl-alpha-D-glucosamine + H2O = a UDP-3-O-[(3R)-3-hydroxyacyl]-alpha-D-glucosamine + acetate. It participates in glycolipid biosynthesis; lipid IV(A) biosynthesis; lipid IV(A) from (3R)-3-hydroxytetradecanoyl-[acyl-carrier-protein] and UDP-N-acetyl-alpha-D-glucosamine: step 2/6. Its function is as follows. Catalyzes the hydrolysis of UDP-3-O-myristoyl-N-acetylglucosamine to form UDP-3-O-myristoylglucosamine and acetate, the committed step in lipid A biosynthesis. This Chlamydia caviae (strain ATCC VR-813 / DSM 19441 / 03DC25 / GPIC) (Chlamydophila caviae) protein is UDP-3-O-acyl-N-acetylglucosamine deacetylase.